Here is a 122-residue protein sequence, read N- to C-terminus: Large ribosomal subunit protein bL19 (122 aa).

The protein belongs to the bacterial ribosomal protein bL19 family.

Functionally, this protein is located at the 30S-50S ribosomal subunit interface and may play a role in the structure and function of the aminoacyl-tRNA binding site. The sequence is that of Large ribosomal subunit protein bL19 from Chlamydia felis (strain Fe/C-56) (Chlamydophila felis).